The chain runs to 128 residues: Small ribosomal subunit protein uS12 (128 aa).

Residues 1-24 are disordered; sequence MPTFNQLVKYGREKRKKKSKAPAL. Position 89 is a 3-methylthioaspartic acid (Asp-89). The disordered stretch occupies residues 105–128; the sequence is AGVEGRRQSRSKYGTKRPKEEKGG.

This sequence belongs to the universal ribosomal protein uS12 family. Part of the 30S ribosomal subunit. Contacts proteins S8 and S17. May interact with IF1 in the 30S initiation complex.

In terms of biological role, with S4 and S5 plays an important role in translational accuracy. Its function is as follows. Interacts with and stabilizes bases of the 16S rRNA that are involved in tRNA selection in the A site and with the mRNA backbone. Located at the interface of the 30S and 50S subunits, it traverses the body of the 30S subunit contacting proteins on the other side and probably holding the rRNA structure together. The combined cluster of proteins S8, S12 and S17 appears to hold together the shoulder and platform of the 30S subunit. The chain is Small ribosomal subunit protein uS12 from Aquifex aeolicus (strain VF5).